The chain runs to 338 residues: Holliday junction branch migration complex subunit RuvB (338 aa).

Residues 1 to 180 form a large ATPase domain (RuvB-L) region; the sequence is MERLLDNKFS…FGIIERLDYY (180 aa). 9 residues coordinate ATP: Leu19, Arg20, Gly61, Lys64, Thr65, Thr66, Arg170, Tyr180, and Arg217. Thr65 contacts Mg(2+). The small ATPAse domain (RuvB-S) stretch occupies residues 181 to 251; sequence TVEELSQIVM…VAKSGLEMFE (71 aa). The segment at 254–338 is head domain (RuvB-H); it reads EYGLDLVDRN…FNVKESGDKR (85 aa). Residues Lys309 and Arg314 each contribute to the DNA site.

Belongs to the RuvB family. Homohexamer. Forms an RuvA(8)-RuvB(12)-Holliday junction (HJ) complex. HJ DNA is sandwiched between 2 RuvA tetramers; dsDNA enters through RuvA and exits via RuvB. An RuvB hexamer assembles on each DNA strand where it exits the tetramer. Each RuvB hexamer is contacted by two RuvA subunits (via domain III) on 2 adjacent RuvB subunits; this complex drives branch migration. In the full resolvosome a probable DNA-RuvA(4)-RuvB(12)-RuvC(2) complex forms which resolves the HJ.

It localises to the cytoplasm. The enzyme catalyses ATP + H2O = ADP + phosphate + H(+). Its function is as follows. The RuvA-RuvB-RuvC complex processes Holliday junction (HJ) DNA during genetic recombination and DNA repair, while the RuvA-RuvB complex plays an important role in the rescue of blocked DNA replication forks via replication fork reversal (RFR). RuvA specifically binds to HJ cruciform DNA, conferring on it an open structure. The RuvB hexamer acts as an ATP-dependent pump, pulling dsDNA into and through the RuvAB complex. RuvB forms 2 homohexamers on either side of HJ DNA bound by 1 or 2 RuvA tetramers; 4 subunits per hexamer contact DNA at a time. Coordinated motions by a converter formed by DNA-disengaged RuvB subunits stimulates ATP hydrolysis and nucleotide exchange. Immobilization of the converter enables RuvB to convert the ATP-contained energy into a lever motion, pulling 2 nucleotides of DNA out of the RuvA tetramer per ATP hydrolyzed, thus driving DNA branch migration. The RuvB motors rotate together with the DNA substrate, which together with the progressing nucleotide cycle form the mechanistic basis for DNA recombination by continuous HJ branch migration. Branch migration allows RuvC to scan DNA until it finds its consensus sequence, where it cleaves and resolves cruciform DNA. This chain is Holliday junction branch migration complex subunit RuvB, found in Caldicellulosiruptor saccharolyticus (strain ATCC 43494 / DSM 8903 / Tp8T 6331).